Here is a 354-residue protein sequence, read N- to C-terminus: uncharacterized protein (354 aa).

A helical membrane pass occupies residues 43-63; sequence LIAVTLWSCVGSLLFICLLAV.

The protein resides in the cell membrane. This is an uncharacterized protein from Bacillus subtilis (strain 168).